A 360-amino-acid polypeptide reads, in one-letter code: Hereditary hemochromatosis protein homolog (360 aa).

An N-terminal signal peptide occupies residues 1 to 25 (MDRSAGLPVRLLLLLLLLLLWSVAP). The segment at 26–127 (QALRPGSHSL…KVTKLRVVPE (102 aa)) is alpha-1. Residues 26-319 (QALRPGSHSL…WEPSRSQDMI (294 aa)) are Extracellular-facing. 4 N-linked (GlcNAc...) asparagine glycosylation sites follow: N115, N143, N167, and N247. Residues 128–218 (SHILQVILGC…ELQRGVLGQQ (91 aa)) form an alpha-2 region. 2 disulfides stabilise this stretch: C137–C200 and C238–C295. The alpha-3 stretch occupies residues 219–310 (VPTLVKVTRH…GLDQPLTATW (92 aa)). The region spanning 220-309 (PTLVKVTRHW…PGLDQPLTAT (90 aa)) is the Ig-like C1-type domain. Residues 311–319 (EPSRSQDMI) are connecting peptide. Residues 320–340 (IGIISGITICAIFFVGILILV) traverse the membrane as a helical segment. The Cytoplasmic segment spans residues 341 to 360 (LRKRKVSGGTMGDYVLTECE).

Belongs to the MHC class I family. As to quaternary structure, binds TFR through the extracellular domain in a pH-dependent manner.

The protein resides in the cell membrane. Its function is as follows. Binds to transferrin receptor (TFR) and reduces its affinity for iron-loaded transferrin. The polypeptide is Hereditary hemochromatosis protein homolog (Hfe) (Rattus norvegicus (Rat)).